Consider the following 259-residue polypeptide: Dolichol-phosphate mannosyltransferase subunit 1 (259 aa).

Position 2 is an N-acetylalanine (alanine 2). Serine 3 carries the post-translational modification Phosphoserine. GDP-alpha-D-mannose-binding residues include proline 31, tyrosine 33, glutamate 35, isoleucine 62, aspartate 64, aspartate 117, alanine 118, aspartate 119, arginine 146, arginine 233, and lysine 239. Residue aspartate 119 coordinates Mg(2+). Aspartate 119 provides a ligand contact to Mn(2+).

The protein belongs to the glycosyltransferase 2 family. As to quaternary structure, component of the dolichol-phosphate mannose (DPM) synthase complex composed of DPM1, DPM2 and DPM3; within the complex, directly interacts with DPM3. This interaction may stabilize DPM1. Requires Mg(2+) as cofactor. It depends on Mn(2+) as a cofactor. Ca(2+) serves as cofactor.

Its subcellular location is the endoplasmic reticulum. It catalyses the reaction a di-trans,poly-cis-dolichyl phosphate + GDP-alpha-D-mannose = a di-trans,poly-cis-dolichyl beta-D-mannosyl phosphate + GDP. The protein operates within protein modification; protein glycosylation. Functionally, transfers mannose from GDP-mannose to dolichol monophosphate to form dolichol phosphate mannose (Dol-P-Man) which is the mannosyl donor in pathways leading to N-glycosylation, glycosyl phosphatidylinositol membrane anchoring, and O-mannosylation of proteins; catalytic subunit of the dolichol-phosphate mannose (DPM) synthase complex. The protein is Dolichol-phosphate mannosyltransferase subunit 1 (DPM1) of Sus scrofa (Pig).